The primary structure comprises 357 residues: Probable glutamine amidotransferase DUG3 (357 aa).

C2 serves as the catalytic For GATase activity. In terms of domain architecture, Glutamine amidotransferase type-2 spans 2–260 (CRFLIFKGKQ…PGEYRVERLD (259 aa)).

It belongs to the DUG3 family. As to quaternary structure, component of the GSH degradosomal complex composed of at least DUG1, DUG2 and DUG3.

The protein resides in the cytoplasm. In terms of biological role, component of the GSH degradosomal complex involved in the degradation of glutathione (GSH) and other peptides containing a gamma-glu-X bond. This is Probable glutamine amidotransferase DUG3 (DUG3) from Saccharomyces cerevisiae (strain ATCC 204508 / S288c) (Baker's yeast).